The following is a 194-amino-acid chain: 7-methyl-GTP pyrophosphatase (194 aa).

D69 serves as the catalytic Proton acceptor.

This sequence belongs to the Maf family. YceF subfamily. Requires a divalent metal cation as cofactor.

The protein resides in the cytoplasm. It carries out the reaction N(7)-methyl-GTP + H2O = N(7)-methyl-GMP + diphosphate + H(+). Nucleoside triphosphate pyrophosphatase that hydrolyzes 7-methyl-GTP (m(7)GTP). May have a dual role in cell division arrest and in preventing the incorporation of modified nucleotides into cellular nucleic acids. This is 7-methyl-GTP pyrophosphatase (yceF) from Salmonella typhi.